The following is a 63-amino-acid chain: Sec-independent protein translocase protein TatA (63 aa).

A helical membrane pass occupies residues 1–21 (MGSLSMWHWLIVLVIVLLLFG). A disordered region spans residues 43–63 (MTDEDAPETAKTVDHKADETK). Residues 53-63 (KTVDHKADETK) are compositionally biased toward basic and acidic residues.

This sequence belongs to the TatA/E family. As to quaternary structure, the Tat system comprises two distinct complexes: a TatABC complex, containing multiple copies of TatA, TatB and TatC subunits, and a separate TatA complex, containing only TatA subunits. Substrates initially bind to the TatABC complex, which probably triggers association of the separate TatA complex to form the active translocon.

It localises to the cell inner membrane. Part of the twin-arginine translocation (Tat) system that transports large folded proteins containing a characteristic twin-arginine motif in their signal peptide across membranes. TatA could form the protein-conducting channel of the Tat system. The polypeptide is Sec-independent protein translocase protein TatA (Rhizobium etli (strain ATCC 51251 / DSM 11541 / JCM 21823 / NBRC 15573 / CFN 42)).